Reading from the N-terminus, the 475-residue chain is tRNA modification GTPase MnmE (475 aa).

Residues arginine 24, glutamate 81, and lysine 124 each coordinate (6S)-5-formyl-5,6,7,8-tetrahydrofolate. The TrmE-type G domain maps to glycine 220–glycine 397. Asparagine 230 contributes to the K(+) binding site. GTP contacts are provided by residues asparagine 230 to serine 235, threonine 249 to threonine 255, aspartate 274 to glycine 277, and serine 378 to arginine 380. Serine 234 contacts Mg(2+). Residues threonine 249, isoleucine 251, and threonine 254 each contribute to the K(+) site. Residue threonine 255 participates in Mg(2+) binding. Lysine 475 contacts (6S)-5-formyl-5,6,7,8-tetrahydrofolate.

It belongs to the TRAFAC class TrmE-Era-EngA-EngB-Septin-like GTPase superfamily. TrmE GTPase family. As to quaternary structure, homodimer. Heterotetramer of two MnmE and two MnmG subunits. K(+) serves as cofactor.

Its subcellular location is the cytoplasm. Exhibits a very high intrinsic GTPase hydrolysis rate. Involved in the addition of a carboxymethylaminomethyl (cmnm) group at the wobble position (U34) of certain tRNAs, forming tRNA-cmnm(5)s(2)U34. The sequence is that of tRNA modification GTPase MnmE from Cupriavidus metallidurans (strain ATCC 43123 / DSM 2839 / NBRC 102507 / CH34) (Ralstonia metallidurans).